The following is a 534-amino-acid chain: Echilunin cytochrome P450 monooxygenase (534 aa).

The helical transmembrane segment at 18–38 (VSPAALSWAVVAIYLGTFFWL) threads the bilayer. Residue Cys-441 participates in heme binding.

This sequence belongs to the cytochrome P450 family. Heme serves as cofactor.

Its subcellular location is the membrane. The enzyme catalyses preechinulin + reduced [NADPH--hemoprotein reductase] + O2 = neoechinulin A + oxidized [NADPH--hemoprotein reductase] + 2 H2O + H(+). The protein operates within secondary metabolite biosynthesis. Its pathway is alkaloid biosynthesis. Cytochrome P450 monooxygenase; part of the gene cluster that mediates the biosynthesis of echinulin family alkaloid. The pathway begins with the biosynthesis of the cyclic dipeptide cyclo-L-Trp-L-Ala (cyclo-TA) by the NRPS echPS via condensation of L-alanine and L-tryptophan. The prenyltransferase echPT1 then catalyzes the first prenylation step, a reverse prenylation reaction at C2, to yield preechinulin. Preechinulin is the substrate of the cytochrome P450 monooxygenase echP450 that catalyzes the formation of the double bond between C10 and C11 to produce neoechulin A. The unique prenyltransferase echPT2 functions as a competitive enzyme with echP450 for preechinulin metabolization and uses preechinulin for effective regiospecific prenylations. Preechinulin is prenylated by echPT2 at C5 or C7. C7-prenylation leads to accumulation of tardioxopiperazine B without further modification by echPT2. In contrast, the C5-prenylated tardioxopiperazine A can be prenylated again by echPT2, predominantly at C7 to form echinulin or less frequently at C4 to give variecolorin L. EchPT2 also accepts neoechilunin A to produce varlecolorin G (prenylation at C5) or isoechinulin A (prenylation at C7). EchPT2 further converts isoechinulin A into dehydroechinulin. Moreover, a yet unidentified enzyme can also convert neoechilunin A into neoechilunin B by introducing a double bond between positions C14 and C17 and thus provides a further substrate to echPT2 for C5 and C7 prenylation. In Aspergillus ruber (strain CBS 135680), this protein is Echilunin cytochrome P450 monooxygenase.